Reading from the N-terminus, the 185-residue chain is Fimbrial subunit type 1 (185 aa).

The N-terminal stretch at 1-22 (MRHKLMTSTIASLMFVAAAAVA) is a signal peptide. An intrachain disulfide couples C46 to C86.

Belongs to the fimbrial protein family.

It is found in the fimbrium. This is Fimbrial subunit type 1 from Salmonella typhimurium.